A 338-amino-acid polypeptide reads, in one-letter code: MKRMIALDGAQGEGGGQILRSALSLSMITGQPFTITGIRAGRAKPGLLRQHLTAVKAAAEICRATVEGAELGSQRLVFRPGTVRGGDYRFAIGSAGSCTLVLQTVLPALWFADGPSRVEVSGGTDNPSAPPADFIRRVLEPLLAKIGVHQQTTLLRHGFYPAGGGVVATEVSPVASFNSLQLGERGNIVQMRGEVLLAGVPRHVAEREIATLAGSFSLHEQNIHNLPRDQGPGNTVSLEVESENITERFFVVGEKRVSAEVVAAQLVKEVKRYLASPAAVGEYLADQLVLPMALAGTGEFTVAHPSCHLLTNIAVVERFLPVRFGLIETDGVTRVSIE.

ATP contacts are provided by residues glutamine 103 and tyrosine 283–glutamine 287. Residue histidine 308 is the Tele-AMP-histidine intermediate of the active site.

The protein belongs to the RNA 3'-terminal cyclase family. Type 1 subfamily.

The protein localises to the cytoplasm. The enzyme catalyses a 3'-end 3'-phospho-ribonucleotide-RNA + ATP = a 3'-end 2',3'-cyclophospho-ribonucleotide-RNA + AMP + diphosphate. In terms of biological role, catalyzes the conversion of 3'-phosphate to a 2',3'-cyclic phosphodiester at the end of RNA. The mechanism of action of the enzyme occurs in 3 steps: (A) adenylation of the enzyme by ATP; (B) transfer of adenylate to an RNA-N3'P to produce RNA-N3'PP5'A; (C) and attack of the adjacent 2'-hydroxyl on the 3'-phosphorus in the diester linkage to produce the cyclic end product. The biological role of this enzyme is unknown but it is likely to function in some aspects of cellular RNA processing. The polypeptide is RNA 3'-terminal phosphate cyclase (Escherichia coli O45:K1 (strain S88 / ExPEC)).